The primary structure comprises 106 residues: Nucleoid-associated protein RPB_0667 (106 aa).

This sequence belongs to the YbaB/EbfC family. As to quaternary structure, homodimer.

It localises to the cytoplasm. The protein resides in the nucleoid. In terms of biological role, binds to DNA and alters its conformation. May be involved in regulation of gene expression, nucleoid organization and DNA protection. The sequence is that of Nucleoid-associated protein RPB_0667 from Rhodopseudomonas palustris (strain HaA2).